Reading from the N-terminus, the 1796-residue chain is Non-reducing polyketide synthase nscA (1796 aa).

The N-terminal acylcarrier protein transacylase domain (SAT) stretch occupies residues Asp18–His256. A Ketosynthase family 3 (KS3) domain is found at Ser392–Asp825. Catalysis depends on for beta-ketoacyl synthase activity residues Cys565, His700, and His743. The malonyl-CoA:ACP transacylase (MAT) domain stretch occupies residues Phe931–Leu1251. The segment at Thr1317–Pro1636 is product template (PT) domain. Positions His1321–Ala1457 are N-terminal hotdog fold. Positions His1321–Asp1631 constitute a PKS/mFAS DH domain. His1353 acts as the Proton acceptor; for dehydratase activity in catalysis. Positions Ala1485–Asp1631 are C-terminal hotdog fold. The Proton donor; for dehydratase activity role is filled by Asp1542. The disordered stretch occupies residues Thr1688–Pro1720. Residues Pro1697–Pro1708 are compositionally biased toward low complexity. In terms of domain architecture, Carrier spans Asp1719–Cys1796. At Ser1756 the chain carries O-(pantetheine 4'-phosphoryl)serine.

It depends on pantetheine 4'-phosphate as a cofactor.

It functions in the pathway secondary metabolite biosynthesis. Functionally, non-reducing polyketide synthase; part of the gene cluster that mediates the biosynthesis of neosartoricin B, a prenylated anthracenone that probably exhibits T-cell antiproliferative activity, suggestive of a physiological role as an immunosuppressive agent. The non-reducing polyketide synthase nscA probably synthesizes and cyclizes the decaketide backbone. The hydrolase nscB then mediates the product release through hydrolysis followed by spontaneous decarboxylation. The prenyltransferase nscD catalyzes the addition of the dimethylallyl group to the aromatic C5. The FAD-dependent monooxygenase nscC is then responsible for the stereospecific hydroxylation at C2. Neosartoricin B can be converted into two additional compounds neosartoricins C and D. Neosartoricin C is a spirocyclic compound that is cyclized through the attack of C3 hydroxyl on C14, followed by dehydration. On the other hand, neosartoricin D is a further cyclized compound in which attack of C2 on C14 in neosartoricin C results in the formation of the acetal-containing dioxabicyclo-octanone ring. Both of these compounds are novel and possibly represent related metabolites of the gene cluster. The chain is Non-reducing polyketide synthase nscA from Arthroderma otae (strain ATCC MYA-4605 / CBS 113480) (Microsporum canis).